A 397-amino-acid chain; its full sequence is Presenilin-like protein At2g29900 (397 aa).

The Cytoplasmic portion of the chain corresponds to 1–17 (MDRNQRPRSILDSLGEE). Residues 18–38 (LIAILTPVSICMFTVVLLVCI) traverse the membrane as a helical segment. Residues 39 to 76 (LNSDPSSSSASFSSIATAAYSESDSDSSWDKFVGALLN) are Lumenal-facing. The helical transmembrane segment at 77–97 (SVVFVAAITVATFVLVLLFYL) threads the bilayer. Residues 98 to 106 (RCVKFLKFY) are Cytoplasmic-facing. The chain crosses the membrane as a helical span at residues 107–127 (MGFSAFIVLGNLGGEILVLLI). At 128-135 (DRFRFPID) the chain is on the lumenal side. The helical transmembrane segment at 136–156 (SITFLILLFNFSVVGVFAVFM) threads the bilayer. The Cytoplasmic portion of the chain corresponds to 157–158 (SK). A helical transmembrane segment spans residues 159–179 (FSILITQGYLVWIGVLVAYFF). At 180–188 (TLLPEWTTW) the chain is on the lumenal side. The chain crosses the membrane as a helical span at residues 189–209 (VLLVALALYDIAAVLLPVGPL). The active site involves Asp198. Topologically, residues 210 to 305 (RLLVEMAISR…NSETFLEGIG (96 aa)) are cytoplasmic. Residues 306–326 (LGSSGAIKLGLGDFIFYSVLV) traverse the membrane as a helical segment. Residue Asp318 is part of the active site. At 327 to 336 (GRAAMYDLMT) the chain is on the lumenal side. A helical transmembrane segment spans residues 337–357 (VYACYLAIIAGLGITLMLLSV). Topologically, residues 358–366 (YQKALPALP) are cytoplasmic. A PAL motif is present at residues 363 to 365 (PAL). The helical intramembrane region spans 367–387 (VSIMLGVVFYFLARLLLEVFV). At 388-397 (VQCSSNLVMF) the chain is on the cytoplasmic side.

Belongs to the peptidase A22A family. Homodimer. Probable component of the gamma-secretase complex, a complex composed of a presenilin homodimer, nicastrin, APH1 and PEN2.

It is found in the endoplasmic reticulum membrane. The protein resides in the golgi apparatus membrane. Probable subunit of the gamma-secretase complex, an endoprotease complex that catalyzes the intramembrane cleavage of integral membrane proteins such as Notch receptors. The chain is Presenilin-like protein At2g29900 from Arabidopsis thaliana (Mouse-ear cress).